Here is a 219-residue protein sequence, read N- to C-terminus: Lipid transferase CIDEB (219 aa).

The CIDE-N domain maps to 34-110 (PQRPFRVCDH…VLQSGQSWSP (77 aa)).

It belongs to the CIDE family. As to quaternary structure, interacts with DFFA. Interacts with DFFB; inhibited by DFFB. Interacts with APOB. Interacts with PREB/SEC12; facilitating loading of SCAP-SREBP into COPII vesicles. (Microbial infection) Interacts (via N-terminus) with HCV non-structural protein 5A (via N-terminus); this interaction seems to regulate the association of HCV particles with ApoE. Highly expressed in liver and small intestine and, at lower levels, in colon, kidney and spleen.

The protein localises to the lipid droplet. It is found in the endoplasmic reticulum membrane. It localises to the golgi apparatus. The protein resides in the cytoplasmic vesicle. Its subcellular location is the COPI-coated vesicle. Functionally, lipid transferase specifically expressed in hepatocytes, which promotes unilocular lipid droplet formation by mediating lipid droplet fusion. Lipid droplet fusion promotes their enlargement, restricting lipolysis and favoring lipid storage. Localizes on the lipid droplet surface, at focal contact sites between lipid droplets, and mediates atypical lipid droplet fusion by promoting directional net neutral lipid transfer from the smaller to larger lipid droplets. The transfer direction may be driven by the internal pressure difference between the contacting lipid droplet pair. Promotes lipid exchange and lipid droplet fusion in both small and large lipid droplet-containing hepatocytes. In addition to its role in lipid droplet fusion, also involved in cytoplasmic vesicle biogenesis and transport. Required for very-low-density lipoprotein (VLDL) lipidation and maturation. Probably involved in the biogenesis of VLDL transport vesicles by forming a COPII vesicle coat and facilitating the formation of endoplasmic reticulum-derived large vesicles. Also involved in sterol-regulated export of the SCAP-SREBP complex, composed of SCAP, SREBF1/SREBP1 and SREBF2/SREBP2, by promoting loading of SCAP-SREBP into COPII vesicles. May also activate apoptosis. In terms of biological role, (Microbial infection) Involved in Hepatatis C virus (HCV) assembly and required for HCV entry into hepatocytes. The protein is Lipid transferase CIDEB of Homo sapiens (Human).